Here is a 323-residue protein sequence, read N- to C-terminus: Serine/threonine-protein phosphatase PP1 (323 aa).

Mn(2+) is bound by residues aspartate 63, histidine 65, aspartate 91, and asparagine 123. The Proton donor role is filled by histidine 124. Residues histidine 172 and histidine 247 each contribute to the Mn(2+) site.

This sequence belongs to the PPP phosphatase family. PP-1 subfamily. Requires Mn(2+) as cofactor.

The enzyme catalyses O-phospho-L-seryl-[protein] + H2O = L-seryl-[protein] + phosphate. It catalyses the reaction O-phospho-L-threonyl-[protein] + H2O = L-threonyl-[protein] + phosphate. Plays an important role in the control of mitosis by reversing the action of the nimA kinase. The polypeptide is Serine/threonine-protein phosphatase PP1 (bimG) (Emericella nidulans (strain FGSC A4 / ATCC 38163 / CBS 112.46 / NRRL 194 / M139) (Aspergillus nidulans)).